A 387-amino-acid chain; its full sequence is Erythronate-4-phosphate dehydrogenase (387 aa).

Residues Ser-45 and Thr-67 each coordinate substrate. Asp-147 is a binding site for NAD(+). Residue Arg-208 is part of the active site. Asp-232 provides a ligand contact to NAD(+). Residue Glu-237 is part of the active site. His-254 (proton donor) is an active-site residue. Gly-257 lines the NAD(+) pocket. Substrate is bound at residue Tyr-258.

It belongs to the D-isomer specific 2-hydroxyacid dehydrogenase family. PdxB subfamily. As to quaternary structure, homodimer.

It is found in the cytoplasm. It carries out the reaction 4-phospho-D-erythronate + NAD(+) = (R)-3-hydroxy-2-oxo-4-phosphooxybutanoate + NADH + H(+). Its pathway is cofactor biosynthesis; pyridoxine 5'-phosphate biosynthesis; pyridoxine 5'-phosphate from D-erythrose 4-phosphate: step 2/5. Catalyzes the oxidation of erythronate-4-phosphate to 3-hydroxy-2-oxo-4-phosphonooxybutanoate. The chain is Erythronate-4-phosphate dehydrogenase from Shewanella sediminis (strain HAW-EB3).